A 98-amino-acid chain; its full sequence is NADH-ubiquinone oxidoreductase chain 4L (98 aa).

Transmembrane regions (helical) follow at residues 1-21, 29-49, and 61-81; these read MSLV…GLLM, ALLC…LTIL, and IILL…LIMI.

This sequence belongs to the complex I subunit 4L family. Core subunit of respiratory chain NADH dehydrogenase (Complex I) which is composed of 45 different subunits.

Its subcellular location is the mitochondrion inner membrane. It catalyses the reaction a ubiquinone + NADH + 5 H(+)(in) = a ubiquinol + NAD(+) + 4 H(+)(out). In terms of biological role, core subunit of the mitochondrial membrane respiratory chain NADH dehydrogenase (Complex I) which catalyzes electron transfer from NADH through the respiratory chain, using ubiquinone as an electron acceptor. Part of the enzyme membrane arm which is embedded in the lipid bilayer and involved in proton translocation. In Monodon monoceros (Narwhal), this protein is NADH-ubiquinone oxidoreductase chain 4L (MT-ND4L).